Here is a 503-residue protein sequence, read N- to C-terminus: Probable cytosol aminopeptidase (503 aa).

K270 and D275 together coordinate Mn(2+). K282 is a catalytic residue. The Mn(2+) site is built by D293, D352, and E354. Residue R356 is part of the active site.

It belongs to the peptidase M17 family. Mn(2+) serves as cofactor.

It is found in the cytoplasm. The enzyme catalyses Release of an N-terminal amino acid, Xaa-|-Yaa-, in which Xaa is preferably Leu, but may be other amino acids including Pro although not Arg or Lys, and Yaa may be Pro. Amino acid amides and methyl esters are also readily hydrolyzed, but rates on arylamides are exceedingly low.. It catalyses the reaction Release of an N-terminal amino acid, preferentially leucine, but not glutamic or aspartic acids.. Presumably involved in the processing and regular turnover of intracellular proteins. Catalyzes the removal of unsubstituted N-terminal amino acids from various peptides. This Enterobacter sp. (strain 638) protein is Probable cytosol aminopeptidase.